Reading from the N-terminus, the 589-residue chain is Aspartate--tRNA ligase (589 aa).

Glutamate 174 provides a ligand contact to L-aspartate. An aspartate region spans residues 198 to 201; it reads QLFK. Arginine 220 contacts L-aspartate. Residues 220–222 and glutamine 229 contribute to the ATP site; that span reads RDE. An L-aspartate-binding site is contributed by histidine 448. Position 483 (glutamate 483) interacts with ATP. Residue arginine 490 coordinates L-aspartate. 535–538 is a binding site for ATP; that stretch reads GIDR.

This sequence belongs to the class-II aminoacyl-tRNA synthetase family. Type 1 subfamily. As to quaternary structure, homodimer.

The protein resides in the cytoplasm. The catalysed reaction is tRNA(Asp) + L-aspartate + ATP = L-aspartyl-tRNA(Asp) + AMP + diphosphate. Its function is as follows. Catalyzes the attachment of L-aspartate to tRNA(Asp) in a two-step reaction: L-aspartate is first activated by ATP to form Asp-AMP and then transferred to the acceptor end of tRNA(Asp). The sequence is that of Aspartate--tRNA ligase from Xylella fastidiosa (strain M23).